A 164-amino-acid polypeptide reads, in one-letter code: Thiol peroxidase (164 aa).

Positions 18–163 (INEGDFAPDF…FDAALAAYKN (146 aa)) constitute a Thioredoxin domain. The Cysteine sulfenic acid (-SOH) intermediate role is filled by Cys60. A disulfide bridge links Cys60 with Cys93.

Belongs to the peroxiredoxin family. Tpx subfamily. Homodimer.

It carries out the reaction a hydroperoxide + [thioredoxin]-dithiol = an alcohol + [thioredoxin]-disulfide + H2O. Its function is as follows. Thiol-specific peroxidase that catalyzes the reduction of hydrogen peroxide and organic hydroperoxides to water and alcohols, respectively. Plays a role in cell protection against oxidative stress by detoxifying peroxides. The chain is Thiol peroxidase from Staphylococcus aureus (strain COL).